A 279-amino-acid polypeptide reads, in one-letter code: Undecaprenyl-diphosphatase (279 aa).

The next 6 membrane-spanning stretches (helical) occupy residues 45-65 (FVEM…IVIY), 85-105 (WQLW…ALPF), 113-133 (FNFM…FIWV), 188-208 (SVAA…YSGL), 226-246 (LILL…IRFL), and 255-275 (FTIF…YWLV).

It belongs to the UppP family.

The protein localises to the cell membrane. The catalysed reaction is di-trans,octa-cis-undecaprenyl diphosphate + H2O = di-trans,octa-cis-undecaprenyl phosphate + phosphate + H(+). Its function is as follows. Catalyzes the dephosphorylation of undecaprenyl diphosphate (UPP). Confers resistance to bacitracin. The chain is Undecaprenyl-diphosphatase from Streptococcus agalactiae serotype Ia (strain ATCC 27591 / A909 / CDC SS700).